Here is a 469-residue protein sequence, read N- to C-terminus: Adenosylhomocysteinase (469 aa).

Substrate-binding residues include Thr-58, Asp-133, and Glu-195. 196 to 198 (TTT) lines the NAD(+) pocket. Substrate contacts are provided by Lys-225 and Asp-229. Residues Asn-230, 259 to 264 (GFGDVG), Glu-282, Asn-317, 338 to 340 (IGH), and Asn-383 contribute to the NAD(+) site.

Belongs to the adenosylhomocysteinase family. It depends on NAD(+) as a cofactor.

The protein localises to the cytoplasm. It carries out the reaction S-adenosyl-L-homocysteine + H2O = L-homocysteine + adenosine. The protein operates within amino-acid biosynthesis; L-homocysteine biosynthesis; L-homocysteine from S-adenosyl-L-homocysteine: step 1/1. Functionally, may play a key role in the regulation of the intracellular concentration of adenosylhomocysteine. The chain is Adenosylhomocysteinase from Rhodopseudomonas palustris (strain TIE-1).